Consider the following 297-residue polypeptide: DNA processing protein DprA (297 aa).

The protein belongs to the DprA/Smf family. In terms of assembly, interacts with RecA. Interacts with ComFA and ComFC.

It is found in the cytoplasm. Protein that helps load RecA onto ssDNA during transformation. Binds cooperatively to circular ssDNA, is able to bridge different segments of DNA. Favors the loading of RecA onto SsbA- or SsbB-coated ssDNA and formation of RecA-DNA filaments. RecA-ATP cannot catalyze homologous DNA strand exchange; SsbA and DprA activate strand exchange by RecA-ATP. In Bacillus subtilis (strain 168), this protein is DNA processing protein DprA.